We begin with the raw amino-acid sequence, 330 residues long: MNTDNPKSHISRIAYPAIIVFLILTLLGSLVERFHPFTSWLTPPVALLMGLAYALIFGSTHRRANKLGSKVLLQYSVVGLGFGMNLGESLASGRDGMMFTIISVFGTLLLGWFIGRKILQMNRNTSALISAGTAICGGSAIAAVGPILKAEEHEMSVALGTVFLLNAVALFIFPSIGHWLALDQQQFGTWAAIAIHDTSSVVGAGSAYGEEALRVATTIKLTRALWIVPLTLVFSFVYKTKGAKRFPVPLFILFFIGAIILNTYLLEAYFPEVGRFVASLARKGLTLSLFFIGASLTKEVIASVGVRALLQGLFLWILISVGSLAFILLI.

Helical transmembrane passes span 13-31, 36-58, 71-93, 97-114, 126-148, 158-180, 248-270, 285-307, and 312-329; these read IAYP…GSLV, PFTS…LIFG, VLLQ…LASG, MMFT…GWFI, SALI…GPIL, ALGT…GHWL, VPLF…EAYF, LTLS…VGVR, and GLFL…FILL.

Belongs to the UPF0324 family.

It localises to the cell membrane. The polypeptide is UPF0324 membrane protein PG_2004 (Porphyromonas gingivalis (strain ATCC BAA-308 / W83)).